We begin with the raw amino-acid sequence, 369 residues long: Protein RecA (369 aa).

77-84 contacts ATP; the sequence is GPESSGKT.

Belongs to the RecA family.

The protein localises to the cytoplasm. Functionally, can catalyze the hydrolysis of ATP in the presence of single-stranded DNA, the ATP-dependent uptake of single-stranded DNA by duplex DNA, and the ATP-dependent hybridization of homologous single-stranded DNAs. It interacts with LexA causing its activation and leading to its autocatalytic cleavage. The polypeptide is Protein RecA (Corynebacterium pseudotuberculosis (strain C231)).